A 444-amino-acid chain; its full sequence is Endothelin-3 receptor (444 aa).

The first 18 residues, 1-18 (MATVILFVAWMACLMVGV), serve as a signal peptide directing secretion. The Extracellular portion of the chain corresponds to 19–88 (CYQEFQTQQN…SRAKIRHAFK (70 aa)). Asn-60 carries N-linked (GlcNAc...) asparagine glycosylation. Residues 89 to 113 (YVTTILSCVIFLVGIVGNSTLLRII) form a helical membrane-spanning segment. Residues 114–124 (YKNKCMRNGPN) are Cytoplasmic-facing. The helical transmembrane segment at 125-145 (VLIASLALGDLFYILIAIPII) threads the bilayer. Residues 146–161 (SISFWLSTGHSEYIYQ) are Extracellular-facing. A helical transmembrane segment spans residues 162 to 180 (LVHLYRARVYSLSLCALSI). At 181-201 (DRYRAVASWNRIRSIGIPVRK) the chain is on the cytoplasmic side. A helical membrane pass occupies residues 202-226 (AIELTLIWAVAIIVAVPEAIAFNLV). Over 227-254 (ELDFRGQTILVCMLPMEQTSDFMRFYQE) the chain is Extracellular. The helical transmembrane segment at 255–279 (VKVWWLFGFYFCLPLACTGVFYTLM) threads the bilayer. Topologically, residues 280 to 307 (SCEMLSIKNGMRIALNDHMKQRREVAKT) are cytoplasmic. Residues 308–328 (VFCLVVIFALCWLPLHVSSIF) traverse the membrane as a helical segment. Over 329-365 (VRLSATVKRACILKNKRSCIMAEIQTGVNYQLLMVMN) the chain is Extracellular. A helical transmembrane segment spans residues 366–386 (YTGINMASLNSCIGPVALYFV). Topologically, residues 387-444 (SRKFKNCFQSCLCCWCHRPTLTITPMDEKGSGGKWKANGHDLDLDRSSSRLSNKYSSS) are cytoplasmic. Residues 416 to 444 (GSGGKWKANGHDLDLDRSSSRLSNKYSSS) are disordered. Residues 424-434 (NGHDLDLDRSS) are compositionally biased toward basic and acidic residues. Positions 435–444 (SRLSNKYSSS) are enriched in low complexity.

Belongs to the G-protein coupled receptor 1 family. Endothelin receptor subfamily.

Its subcellular location is the cell membrane. In terms of biological role, receptor for endothelin-3. Mediates its action by association with G proteins that activate a phosphatidylinositol-calcium second messenger system. The polypeptide is Endothelin-3 receptor (Xenopus laevis (African clawed frog)).